Consider the following 495-residue polypeptide: Transmembrane protein 161A (495 aa).

The first 28 residues, 1-28 (MALMGVQLVVSLLAVSIMQRMAPHLSFA), serve as a signal peptide directing secretion. At 29 to 99 (RWLLCNGSLL…VNVMDALVLR (71 aa)) the chain is on the extracellular side. A glycan (N-linked (GlcNAc...) asparagine) is linked at Asn-34. Residues 100-120 (FFVEYQWLIDFAVYATGIYLF) traverse the membrane as a helical segment. Residues 121–135 (TEGYYSVVDASKEVN) are Cytoplasmic-facing. A helical transmembrane segment spans residues 136 to 156 (IASIWCVLTVLFCLRTLYLLM). Over 157-167 (SHYFLSEEGGE) the chain is Extracellular. Residues 168-188 (RSVCLAFGFLSLLIAMLVLVV) traverse the membrane as a helical segment. Over 189-227 (REDYLEFGLEPGFTSLFDNFEVFARKQGYEWSVPFTKLS) the chain is Cytoplasmic. The helical transmembrane segment at 228 to 248 (VKLGLAVICAFIGALLAFPGL) threads the bilayer. At 249-265 (RLAQTHLDAVQMNADRP) the chain is on the extracellular side. The helical transmembrane segment at 266–286 (MIQILLHMSFLSPLVIIVMWI) threads the bilayer. Residues 287–305 (KPIARDFLGNAPMGKTSVT) lie on the Cytoplasmic side of the membrane. Residues 306–326 (LLSSSAFSSVRLWTIVVLCVL) traverse the membrane as a helical segment. Residues 327-367 (RLLLTRYHLQAYLNLAQKWVEQMKKEAGRIAAIDIQRKVTR) are Extracellular-facing. A helical transmembrane segment spans residues 368-388 (IFCYLTVVTLQYLIPILLVLF). Over 389–465 (STLALKSLGD…ALLTPIFFRG (77 aa)) the chain is Cytoplasmic. The helical transmembrane segment at 466–486 (IFAFLTWWVAACQLISSLFGI) threads the bilayer. Over 487–495 (YFHQYLMHN) the chain is Extracellular.

The protein belongs to the TMEM161 family.

The protein resides in the membrane. Its function is as follows. May play a role in protection against oxidative stress. This Danio rerio (Zebrafish) protein is Transmembrane protein 161A (tmem161a).